Here is a 146-residue protein sequence, read N- to C-terminus: Arginine vasopressin-induced protein 1 (146 aa).

Disordered regions lie at residues 1 to 31 and 80 to 146; these read MGTP…RKQA and RRKR…QIRH. The segment covering 80–92 has biased composition (basic residues); it reads RRKRPPRQNHCSR. Positions 106 to 123 are enriched in polar residues; that stretch reads QASTTDTASSEQFGNSRR.

Its function is as follows. May be involved in MAP kinase activation, epithelial sodium channel (ENaC) down-regulation and cell cycling. The sequence is that of Arginine vasopressin-induced protein 1 (Avpi1) from Rattus norvegicus (Rat).